Consider the following 91-residue polypeptide: Large ribosomal subunit protein uL22 (91 aa).

This sequence belongs to the universal ribosomal protein uL22 family. In terms of assembly, part of the 50S ribosomal subunit.

Functionally, this protein binds specifically to 23S rRNA; its binding is stimulated by other ribosomal proteins, e.g. L4, L17, and L20. It is important during the early stages of 50S assembly. It makes multiple contacts with different domains of the 23S rRNA in the assembled 50S subunit and ribosome. In terms of biological role, the globular domain of the protein is located near the polypeptide exit tunnel on the outside of the subunit, while an extended beta-hairpin is found that lines the wall of the exit tunnel in the center of the 70S ribosome. The sequence is that of Large ribosomal subunit protein uL22 (rplV) from Clover yellow edge phytoplasma.